The chain runs to 410 residues: Phosphoglycerate kinase (410 aa).

Substrate is bound by residues 19–21 (DLN), arginine 34, 57–60 (HQGK), arginine 114, and arginine 154. Residues glutamate 332 and 358–361 (GGHS) contribute to the ATP site.

Belongs to the phosphoglycerate kinase family. As to quaternary structure, homodimer.

The protein resides in the cytoplasm. The enzyme catalyses (2R)-3-phosphoglycerate + ATP = (2R)-3-phospho-glyceroyl phosphate + ADP. It participates in carbohydrate degradation; glycolysis; pyruvate from D-glyceraldehyde 3-phosphate: step 2/5. The chain is Phosphoglycerate kinase (pgk) from Pyrococcus abyssi (strain GE5 / Orsay).